We begin with the raw amino-acid sequence, 175 residues long: Peptide deformylase (175 aa).

Residues Cys96 and His138 each coordinate Fe cation. Residue Glu139 is part of the active site. A Fe cation-binding site is contributed by His142.

Belongs to the polypeptide deformylase family. Requires Fe(2+) as cofactor.

The enzyme catalyses N-terminal N-formyl-L-methionyl-[peptide] + H2O = N-terminal L-methionyl-[peptide] + formate. Functionally, removes the formyl group from the N-terminal Met of newly synthesized proteins. Requires at least a dipeptide for an efficient rate of reaction. N-terminal L-methionine is a prerequisite for activity but the enzyme has broad specificity at other positions. This Campylobacter jejuni subsp. jejuni serotype O:2 (strain ATCC 700819 / NCTC 11168) protein is Peptide deformylase.